Reading from the N-terminus, the 247-residue chain is LHFPL tetraspan subfamily member 4 protein (247 aa).

4 helical membrane passes run 22–42, 97–117, 127–147, and 178–198; these read IGVLWAIFTICFAIINVVVFI, FFVLLSMVLILGCITCFSLFF, ICAWMQLLAALCLVLGCMIFP, and ILAIIGILNALILSFLAFVLG.

This sequence belongs to the LHFP family. In terms of assembly, interacts with GABA(A) receptor subunits. Identified in a complex of 720 kDa composed of LHFPL4, NLGN2, GABRA1, GABRB2, GABRG2 and GABRB3. Interacts with GABRB3. Interacts with GABRA2. Interacts with GABRG2. Interacts with GABRA1. Interacts with NLGN2; leading to mutual regulation of protein level and synaptic clustering.

The protein localises to the cell projection. It localises to the dendrite. The protein resides in the postsynaptic cell membrane. Its function is as follows. Plays a role in the regulation of inhibitory synapse formation and function by being involved in maintening gamma-aminobutyric acid receptors (GABAARs) clustering and their associated scaffold proteins at inhibitory synaptic sites. Acts in concert with NLGN2 to recruit or stabilize GABAARs. In Homo sapiens (Human), this protein is LHFPL tetraspan subfamily member 4 protein.